The following is a 388-amino-acid chain: MFIMTKYFTSESVSAGHPDKIADQIADAILDAVLAQDPYARSAVEVTTSTGDVSIFGELSTSAYVNVRQIAMDTIREIGYNQAELGFTADSVNVSNRIVEQSGDIAQAVDSADDDPEQLGAGDQGMVFGYATNETDNYLPLTLALSHRLMRQIRDVREAGTLNYLRPDAKAEVSVELDDNNQVSRIAAVVLSTQHDETVTLDQLREDVRRLVIDPVLPQELVDDETIYYINPSGRFVLGGPQADSGLTGRKIIVDTYGGAAHHGGGAFSGKDATKVDRSAAYFARYVAKNLVAAGVADKLELQVAYAIGVAQPVSLNIETFGTAKIDEDKIRDITAQLFDFRPLAIINHLDLRRPIYKQTAAFGHFGRTDIDLPWEALDQVDKIKALM.

Residue Glu11 participates in Mg(2+) binding. His17 provides a ligand contact to ATP. Glu45 contributes to the K(+) binding site. The L-methionine site is built by Glu58 and Gln101. ATP contacts are provided by residues 168-170 (DAK), 233-236 (SGRF), Asp244, 250-251 (RK), Ala267, Lys271, and Lys275. Position 244 (Asp244) interacts with L-methionine. Lys275 provides a ligand contact to L-methionine.

This sequence belongs to the AdoMet synthase family. Homotetramer. Requires Mn(2+) as cofactor. Mg(2+) is required as a cofactor. It depends on Co(2+) as a cofactor. The cofactor is K(+). In terms of tissue distribution, mostly in Roots.

It is found in the cytoplasm. The catalysed reaction is L-methionine + ATP + H2O = S-adenosyl-L-methionine + phosphate + diphosphate. The protein operates within amino-acid biosynthesis; S-adenosyl-L-methionine biosynthesis; S-adenosyl-L-methionine from L-methionine: step 1/1. In terms of biological role, catalyzes the formation of S-adenosylmethionine from methionine and ATP. The reaction comprises two steps that are both catalyzed by the same enzyme: formation of S-adenosylmethionine (AdoMet) and triphosphate, and subsequent hydrolysis of the triphosphate. This Pinus contorta (Shore pine) protein is S-adenosylmethionine synthase 1 (SAMS1).